The chain runs to 88 residues: UPF0250 protein bbp_432 (88 aa).

The protein belongs to the UPF0250 family.

This chain is UPF0250 protein bbp_432, found in Buchnera aphidicola subsp. Baizongia pistaciae (strain Bp).